We begin with the raw amino-acid sequence, 438 residues long: Aflatoxin cluster transcriptional coactivator aflS (438 aa).

Positions 65–134 (LALYNQLLAC…PSPGHVAHSV (70 aa)) constitute an HTH iclR-type domain. A DNA-binding region (H-T-H motif) is located at residues 95-114 (FEDVADIAGVPECRLRRLVR).

In terms of assembly, interacts with aflR.

It localises to the nucleus. Transcription factor; part of the gene cluster that mediates the biosynthesis of aflatoxin, a polyketide-derived furanocoumarin which is part of the most toxic and carcinogenic compounds among the known mycotoxins. AflS exhibits no DNA-binding capability on its own, but forms a complex with the other aflatoxin cluster transcription factor aflR and acts as a modulator of aflR's DNA-binding by decreasing its DNA-binding affinity. The polypeptide is Aflatoxin cluster transcriptional coactivator aflS (Aspergillus flavus (strain ATCC 200026 / FGSC A1120 / IAM 13836 / NRRL 3357 / JCM 12722 / SRRC 167)).